Consider the following 203-residue polypeptide: ATP-dependent Clp protease proteolytic subunit (203 aa).

Residue Ser100 is the Nucleophile of the active site. The active site involves His125.

This sequence belongs to the peptidase S14 family. In terms of assembly, component of the chloroplastic Clp protease core complex.

It is found in the plastid. It localises to the chloroplast stroma. It catalyses the reaction Hydrolysis of proteins to small peptides in the presence of ATP and magnesium. alpha-casein is the usual test substrate. In the absence of ATP, only oligopeptides shorter than five residues are hydrolyzed (such as succinyl-Leu-Tyr-|-NHMec, and Leu-Tyr-Leu-|-Tyr-Trp, in which cleavage of the -Tyr-|-Leu- and -Tyr-|-Trp bonds also occurs).. In terms of biological role, cleaves peptides in various proteins in a process that requires ATP hydrolysis. Has a chymotrypsin-like activity. Plays a major role in the degradation of misfolded proteins. This is ATP-dependent Clp protease proteolytic subunit from Dioscorea elephantipes (Elephant's foot yam).